Here is a 336-residue protein sequence, read N- to C-terminus: TBC1 domain family member 21 (336 aa).

The 209-residue stretch at 57–265 (GLHPFVRTEA…RLWEVLLTGK (209 aa)) folds into the Rab-GAP TBC domain.

Interacts with ACTB. Interacts with ARMC12, TOMM20, DNAH7 and RAP1A. Interacts with RAB10. Expressed in round and elongated spermatids (at protein level). Expressed specifically in adult testis and very weakly in fetal brain.

It is found in the cytoplasmic vesicle. It localises to the secretory vesicle. Its subcellular location is the acrosome. The protein resides in the cytoplasm. The protein localises to the cytoskeleton. Its function is as follows. Acts as a GTPase-activating protein for Rab family protein(s). Essential for the establishment of male fertility, and is required for both the production of normal sperm number and sperm function. Plays an important role in the formation of intact mitochondria, outer dense fibers and axoneme within the sperm tail. Essential for sperm mitochondrial sheath formation and for the interactions of ARMC12 with VDAC2 and VDAC3. May be involved in acrosome formation and cytoskeletal reorganization during spermiogenesis, possibly by regulating RAB3A activity. The polypeptide is TBC1 domain family member 21 (TBC1D21) (Homo sapiens (Human)).